The sequence spans 325 residues: Intelectin (325 aa).

The N-terminal stretch at 1–23 is a signal peptide; sequence MKYCVLLIMIHLLLVELPQFPEA. Positions 44–266 constitute a Fibrinogen C-terminal domain; that stretch reads IRSSYIGRSC…AAMAICSGVK (223 aa). An intrachain disulfide couples Cys-53 to Cys-82. Ca(2+) contacts are provided by His-98, Glu-99, Asn-101, Gly-104, Gly-109, Asp-110, Asp-145, Glu-274, Glu-286, and Asp-294. Disulfide bonds link Cys-106/Cys-292 and Cys-262/Cys-277. Residues 274 to 275 and Glu-286 each bind a carbohydrate; that span reads EH.

Expressed at high levels in caudal kidney, liver, and swim bladder. Also expressed in gill, spleen, intestine and head kidney. Not detected in heart.

Functionally, may be involved in innate immune surveillance. May specifically recognize carbohydrate chains of pathogens and bacterial components in a calcium-dependent manner. In vitro binds N-acetylglucosamine residues. The chain is Intelectin from Oncorhynchus mykiss (Rainbow trout).